Reading from the N-terminus, the 636-residue chain is Putative ankyrin repeat protein L766 (636 aa).

ANK repeat units follow at residues 63–97, 99–129, 130–159, 161–190, 230–259, 261–284, 322–355, 372–400, 425–455, 517–546, and 548–575; these read NNYL…DYEL, STCH…YIDS, FGNI…FFNC, YYYL…KSNN, FDEK…NYDF, TIIN…YLTD, SRII…KTSI, NPDE…NIPD, DSLE…DTTI, NSIE…NDNN, and LSWA…DIYQ.

This chain is Putative ankyrin repeat protein L766, found in Acanthamoeba polyphaga mimivirus (APMV).